Reading from the N-terminus, the 445-residue chain is MREIVHLQAGQCGNQIGAKFWEVISDEHGIDPTGTYHGDSDLQLERINVYYNEATGGKYVPRAVLVDLEPGTMDSVRSGPFRQIFRPDNFVFGQSGAGNNWAKGHYTEGAELVDSVLDVVRKEAESCDCLQGFQLTHSLGGGTGSGMGTLLISKIREEYPDRIMNTFSVVPSPKVSDTVVEPYNATLSVHQLVENTDETYCIDNEALYDICFRTLKLTTPTYGDLNHLVSATMSGVTTCLRFPGQLNADLRKLAVNMVPFPRLHFFMPGFAPLTSRGSQQYRALTVPDLTQQMFDAKNMMAACEPGHGRYLTVAAVFRGRMSMKEVDEQMLNVQNKNSSYFVEWIPNNVKTAVCDIPPRGLKMSATFIGNSTAIQELFKRISEQFTAMFRRKAFLHWYTGEGMDEMEFTEAESNMNDLVSEYQQYQDATAEEEGEFEEEAEEEAE.

Positions 1–4 (MREI) match the MREI motif motif. GTP contacts are provided by Gln11, Glu69, Ser138, Gly142, Thr143, Gly144, Asn204, and Asn226. Glu69 is a binding site for Mg(2+). The segment at 425 to 445 (YQDATAEEEGEFEEEAEEEAE) is disordered. Residues 429 to 445 (TAEEEGEFEEEAEEEAE) are compositionally biased toward acidic residues. Glu438 carries the post-translational modification 5-glutamyl polyglutamate.

The protein belongs to the tubulin family. In terms of assembly, dimer of alpha and beta chains. A typical microtubule is a hollow water-filled tube with an outer diameter of 25 nm and an inner diameter of 15 nM. Alpha-beta heterodimers associate head-to-tail to form protofilaments running lengthwise along the microtubule wall with the beta-tubulin subunit facing the microtubule plus end conferring a structural polarity. Microtubules usually have 13 protofilaments but different protofilament numbers can be found in some organisms and specialized cells. Requires Mg(2+) as cofactor. Some glutamate residues at the C-terminus are polyglycylated, resulting in polyglycine chains on the gamma-carboxyl group. Glycylation is mainly limited to tubulin incorporated into axonemes (cilia and flagella) whereas glutamylation is prevalent in neuronal cells, centrioles, axonemes, and the mitotic spindle. Both modifications can coexist on the same protein on adjacent residues, and lowering polyglycylation levels increases polyglutamylation, and reciprocally. The precise function of polyglycylation is still unclear. In terms of processing, some glutamate residues at the C-terminus are polyglutamylated, resulting in polyglutamate chains on the gamma-carboxyl group. Polyglutamylation plays a key role in microtubule severing by spastin (SPAST). SPAST preferentially recognizes and acts on microtubules decorated with short polyglutamate tails: severing activity by SPAST increases as the number of glutamates per tubulin rises from one to eight, but decreases beyond this glutamylation threshold. As to expression, highly expressed in testis.

Its subcellular location is the cytoplasm. The protein resides in the cytoskeleton. In terms of biological role, tubulin is the major constituent of microtubules, a cylinder consisting of laterally associated linear protofilaments composed of alpha- and beta-tubulin heterodimers. Microtubules grow by the addition of GTP-tubulin dimers to the microtubule end, where a stabilizing cap forms. Below the cap, tubulin dimers are in GDP-bound state, owing to GTPase activity of alpha-tubulin. TUBB3 plays a role in dorsal root ganglion axon projection towards the spinal cord. This chain is Tubulin beta-3 chain, found in Gallus gallus (Chicken).